Reading from the N-terminus, the 68-residue chain is Antimicrobial peptide UyCT3 (68 aa).

Residues 1–23 (MKNQFVLLLLAIVFLQMIFQSDA) form the signal peptide. Phenylalanine amide is present on phenylalanine 36. Residues 40–68 (GLENMDKFDELFDGDLSEADLDFLKELMR) constitute a propeptide that is removed on maturation.

Belongs to the non-disulfide-bridged peptide (NDBP) superfamily. Short antimicrobial peptide (group 4) family. The non-amidated UyCT3 does not show antimicrobial activity. In terms of tissue distribution, expressed by the venom gland.

Its subcellular location is the secreted. The protein resides in the target cell membrane. Antimicrobial peptide that inhibits the growth of Gram-positive (S.aureus, MIC=10 uM) and Gram-negative bacteria (E.coli, MIC=15 uM and P.aeruginosa, MIC=6 uM). It also shows 35% of hemolysis when 15 uM are tested (95% at 50 uM). This chain is Antimicrobial peptide UyCT3, found in Urodacus yaschenkoi (Inland robust scorpion).